The primary structure comprises 391 residues: Phosphoglycerate kinase (391 aa).

Substrate-binding positions include 21-23 (DLN), Arg-36, 59-62 (HLGR), Arg-114, and Arg-147. ATP is bound by residues Lys-198, Glu-315, and 344 to 347 (GGDT).

This sequence belongs to the phosphoglycerate kinase family. Monomer.

The protein localises to the cytoplasm. The catalysed reaction is (2R)-3-phosphoglycerate + ATP = (2R)-3-phospho-glyceroyl phosphate + ADP. It functions in the pathway carbohydrate degradation; glycolysis; pyruvate from D-glyceraldehyde 3-phosphate: step 2/5. The protein is Phosphoglycerate kinase of Haemophilus ducreyi (strain 35000HP / ATCC 700724).